A 223-amino-acid chain; its full sequence is Germin-like protein subfamily 1 member 10 (223 aa).

A signal peptide spans 1-24 (MAMKSLSFLAALSLLALTLPLTIA). A disulfide bridge links cysteine 34 with cysteine 51. N-linked (GlcNAc...) asparagine glycosylation occurs at asparagine 38. The Cupin type-1 domain occupies 65-215 (PGLQTARPIT…AFQVDPRVVM (151 aa)). 4 residues coordinate Mn(2+): histidine 113, histidine 115, glutamate 120, and histidine 161.

It belongs to the germin family. As to quaternary structure, oligomer (believed to be a pentamer but probably hexamer).

It localises to the secreted. The protein localises to the extracellular space. Its subcellular location is the apoplast. Its function is as follows. May play a role in plant defense. Probably has no oxalate oxidase activity even if the active site is conserved. The sequence is that of Germin-like protein subfamily 1 member 10 from Arabidopsis thaliana (Mouse-ear cress).